A 673-amino-acid chain; its full sequence is Poly(glycerol-phosphate) alpha-glucosyltransferase (673 aa).

S2 is modified (phosphoserine).

This sequence belongs to the glycosyltransferase group 1 family. Glycosyltransferase 4 subfamily.

Its subcellular location is the cytoplasm. It catalyses the reaction 4-O-{[(2R)-1-glycerylphospho](n)-(2R)-1-glycerylphospho}-N-acetyl-beta-D-mannosaminyl-(1-&gt;4)-N-acetyl-alpha-D-glucosaminyl undecaprenyl diphosphate + n UDP-alpha-D-glucose = 4-O-{[(2R)-2-alpha-D-glucosyl-1-glycerylphospho](n)-(2R)-1-glycerylphospho}-N-acetyl-beta-D-mannosaminyl-(1-&gt;4)-N-acetyl-alpha-D-glucosaminyl undecaprenyl diphosphate + n UDP + n H(+). It functions in the pathway cell wall biogenesis; poly(glycerol phosphate) teichoic acid biosynthesis. Catalyzes the addition of glucose to the C-2 hydroxy group of the glycerol units in teichoic acid. In Bacillus subtilis (strain 168), this protein is Poly(glycerol-phosphate) alpha-glucosyltransferase (tagE).